The sequence spans 542 residues: Excitatory amino acid transporter 1 (542 aa).

Residues 1 to 47 (MTKSNGEEARLGGRMERFQQGVRKRTLLAKKKVQNITKEDVKSYLFR) are Cytoplasmic-facing. A helical transmembrane segment spans residues 48-68 (NAFVLLTVTAVIVGTILGFTL). Topologically, residues 69–86 (RPYRMSYREVKYFSFPGE) are extracellular. Residues 87–108 (LLMRMLQMLVLPLIISSLVTGM) traverse the membrane as a helical segment. The Cytoplasmic segment spans residues 109-122 (AALDSKASGKMGMR). Residues 123-145 (AVVYYMTTTIIAVVIGIIIVIII) traverse the membrane as a helical segment. The Extracellular segment spans residues 146-236 (HPGKGTKENM…ITEELVPVPG (91 aa)). Residues 237–260 (SVNGVNALGLVVFSMCFGFVIGNM) form a helical membrane-spanning segment. Over 261–269 (KEQGQALRE) the chain is Cytoplasmic. Residues 270 to 297 (FFDSLNEAIMRLVAVIMWYAPLGILFLI) form a helical membrane-spanning segment. Residues 298–318 (AGKIVEMEDMGVIGGQLAMYT) are Extracellular-facing. A helical membrane pass occupies residues 319-340 (VTVIVGLLIHAVIVLPLLYFLV). The Cytoplasmic portion of the chain corresponds to 341–345 (TRKNP). The discontinuously helical intramembrane region spans 346–376 (WVFIGGLLQALITALGTSSSSATLPITFKCL). 363–365 (SSS) contacts L-aspartate. At 377–385 (EENNGVDKR) the chain is on the cytoplasmic side. The chain crosses the membrane as a helical span at residues 386–412 (VTRFVLPVGATINMDGTALYEALAAIF). Residues glycine 394, threonine 396, and asparagine 398 each coordinate Na(+). Threonine 402 contacts L-aspartate. Residues 413 to 425 (IAQVNNFELNFGQ) are Extracellular-facing. The discontinuously helical intramembrane region spans 426–459 (IITISITATAASIGAAGIPQAGLVTMVIVLTSVG). L-aspartate is bound at residue 443–447 (IPQAG). Residues 460–472 (LPTDDITLIIAVD) are Extracellular-facing. The chain crosses the membrane as a helical span at residues 473 to 494 (WFLDRLRTTTNVLGDSLGAGIV). 2 residues coordinate L-aspartate: aspartate 476 and asparagine 483. Asparagine 483 and aspartate 487 together coordinate Na(+). Residues 495–542 (EHLSRHELKNRDVEMGNSVIEENEMKKPYQLISQESEIEKSMDSETKM) lie on the Cytoplasmic side of the membrane. Serine 512 carries the post-translational modification Phosphoserine.

It belongs to the dicarboxylate/amino acid:cation symporter (DAACS) (TC 2.A.23) family. SLC1A3 subfamily. In terms of assembly, homotrimer. In terms of processing, glycosylated.

Its subcellular location is the cell membrane. It carries out the reaction K(+)(in) + L-glutamate(out) + 3 Na(+)(out) + H(+)(out) = K(+)(out) + L-glutamate(in) + 3 Na(+)(in) + H(+)(in). The enzyme catalyses K(+)(in) + L-aspartate(out) + 3 Na(+)(out) + H(+)(out) = K(+)(out) + L-aspartate(in) + 3 Na(+)(in) + H(+)(in). It catalyses the reaction D-aspartate(out) + K(+)(in) + 3 Na(+)(out) + H(+)(out) = D-aspartate(in) + K(+)(out) + 3 Na(+)(in) + H(+)(in). Functionally, sodium-dependent, high-affinity amino acid transporter that mediates the uptake of L-glutamate and also L-aspartate and D-aspartate. Functions as a symporter that transports one amino acid molecule together with two or three Na(+) ions and one proton, in parallel with the counter-transport of one K(+) ion. Plays a redundant role in the rapid removal of released glutamate from the synaptic cleft, which is essential for terminating the postsynaptic action of glutamate. In Bos taurus (Bovine), this protein is Excitatory amino acid transporter 1 (SLC1A3).